Here is a 360-residue protein sequence, read N- to C-terminus: Phospho-N-acetylmuramoyl-pentapeptide-transferase (360 aa).

The next 10 helical transmembrane spans lie at R25–I45, T73–L93, Y97–Y117, W132–A152, T167–S187, G199–S219, A236–F256, V263–I283, V288–V308, and V338–K358.

The protein belongs to the glycosyltransferase 4 family. MraY subfamily. Requires Mg(2+) as cofactor.

It is found in the cell inner membrane. The catalysed reaction is UDP-N-acetyl-alpha-D-muramoyl-L-alanyl-gamma-D-glutamyl-meso-2,6-diaminopimeloyl-D-alanyl-D-alanine + di-trans,octa-cis-undecaprenyl phosphate = di-trans,octa-cis-undecaprenyl diphospho-N-acetyl-alpha-D-muramoyl-L-alanyl-D-glutamyl-meso-2,6-diaminopimeloyl-D-alanyl-D-alanine + UMP. The protein operates within cell wall biogenesis; peptidoglycan biosynthesis. Catalyzes the initial step of the lipid cycle reactions in the biosynthesis of the cell wall peptidoglycan: transfers peptidoglycan precursor phospho-MurNAc-pentapeptide from UDP-MurNAc-pentapeptide onto the lipid carrier undecaprenyl phosphate, yielding undecaprenyl-pyrophosphoryl-MurNAc-pentapeptide, known as lipid I. The chain is Phospho-N-acetylmuramoyl-pentapeptide-transferase from Azotobacter vinelandii (strain DJ / ATCC BAA-1303).